An 863-amino-acid polypeptide reads, in one-letter code: Importin subunit beta-1 (863 aa).

19 HEAT repeats span residues 2 to 31 (NAGE…AART), 33 to 62 (FAQY…LALK), 85 to 124 (VEIK…ELAT), 129 to 159 (DLMV…YICE), 170 to 201 (SNAI…LYDS), 212 to 248 (EYER…MHLY), 253 to 299 (PFYM…EIQE), 314 to 360 (FARA…QVVG), 364 to 392 (VNPV…AFGS), 399 to 439 (VAML…SSFV), 449 to 481 (LSPM…VCHF), 496 to 530 (YEAI…LITF), 536 to 586 (LPMI…IIRR), 592 to 630 (RTSS…MNSL), 635 to 671 (EVYV…LARA), 677 to 715 (LPYC…ALAI), 720 to 767 (QTYL…ITQA), 778 to 815 (QPYV…LAES), and 822 to 861 (KSYF…KRQA). Residues 21–101 (AEKQLENAAR…KSLALQTLGS (81 aa)) form the Importin N-terminal domain.

Belongs to the importin beta family. Importin beta-1 subfamily. As to quaternary structure, forms a complex with an importin alpha subunit. Interacts with Ran; interacts specifically with the GTP-bound form of Ran (GTP-Ran), protecting it from GTP hydrolysis and nucleotide exchange. Interacts with nucleoporins.

Its subcellular location is the cytoplasm. It localises to the nucleus envelope. The protein localises to the nucleus. It is found in the nuclear pore complex. In terms of biological role, importin beta subunit that functions in nuclear protein import through association with the importin alpha subunit, which binds to the clasical nuclear localization signal (cNLS) in cargo substrates. Docking of the importin/substrate complex to the nuclear pore complex (NPC) is mediated by importin beta through binding to nucleoporin FxFG repeats and the complex is subsequently translocated through the pore by an energy requiring, Ran-dependent mechanism. At the nucleoplasmic side of the NPC, GTP-Ran binds to importin beta and the three components separate, leading to release of the cargo. Importin alpha and beta are re-exported from the nucleus to the cytoplasm where GTP hydrolysis releases Ran from importin beta. The directionality of nuclear import is thought to be conferred by an asymmetric distribution of the GTP- and GDP-bound forms of Ran between the cytoplasm and nucleus. The protein is Importin subunit beta-1 of Schizosaccharomyces pombe (strain 972 / ATCC 24843) (Fission yeast).